The following is a 217-amino-acid chain: LexA repressor (217 aa).

Positions 26–46 (FEEMKLALDLKSKSGIHRLIK) form a DNA-binding region, H-T-H motif. Active-site for autocatalytic cleavage activity residues include Ser138 and Lys176.

The protein belongs to the peptidase S24 family. Homodimer.

It carries out the reaction Hydrolysis of Ala-|-Gly bond in repressor LexA.. Functionally, represses a number of genes involved in the response to DNA damage (SOS response), including recA and lexA. In the presence of single-stranded DNA, RecA interacts with LexA causing an autocatalytic cleavage which disrupts the DNA-binding part of LexA, leading to derepression of the SOS regulon and eventually DNA repair. In Zymomonas mobilis subsp. mobilis (strain ATCC 31821 / ZM4 / CP4), this protein is LexA repressor.